Consider the following 130-residue polypeptide: MHAVSSSHLFYLAFCLLVLTSSATAGPETLCGAELVDALQFVCGDRGFYFNKPTGYGSSSRRAPQTGIVDECCFRSCDLRRLEMYCAPLKPAKSARSVRAQRHTDMPKTQKEVHLKNASRGSAGNKNYRM.

An N-terminal signal peptide occupies residues 1–25 (MHAVSSSHLFYLAFCLLVLTSSATA). The segment at 26–54 (GPETLCGAELVDALQFVCGDRGFYFNKPT) is b. Cystine bridges form between cysteine 31–cysteine 73, cysteine 43–cysteine 86, and cysteine 72–cysteine 77. Residues 55 to 66 (GYGSSSRRAPQT) form a c region. Residues 67 to 87 (GIVDECCFRSCDLRRLEMYCA) form an a region. The segment at 88 to 95 (PLKPAKSA) is d. A propeptide spans 96 to 130 (RSVRAQRHTDMPKTQKEVHLKNASRGSAGNKNYRM) (e peptide). A disordered region spans residues 97-130 (SVRAQRHTDMPKTQKEVHLKNASRGSAGNKNYRM). The segment covering 102–115 (RHTDMPKTQKEVHL) has biased composition (basic and acidic residues). The segment covering 119–130 (SRGSAGNKNYRM) has biased composition (polar residues).

This sequence belongs to the insulin family. As to quaternary structure, forms a ternary complex with IGFR1 and ITGAV:ITGB3. Forms a ternary complex with IGFR1 and ITGA6:ITGB4. Forms a ternary complex with IGFBP3 and ALS.

Its subcellular location is the secreted. The insulin-like growth factors, isolated from plasma, are structurally and functionally related to insulin but have a much higher growth-promoting activity. May be a physiological regulator of [1-14C]-2-deoxy-D-glucose (2DG) transport and glycogen synthesis in osteoblasts. Stimulates glucose transport in bone-derived osteoblastic (PyMS) cells and is effective at much lower concentrations than insulin, not only regarding glycogen and DNA synthesis but also with regard to enhancing glucose uptake. May play a role in synapse maturation. Ca(2+)-dependent exocytosis of IGF1 is required for sensory perception of smell in the olfactory bulb. Acts as a ligand for IGF1R. Binds to the alpha subunit of IGF1R, leading to the activation of the intrinsic tyrosine kinase activity which autophosphorylates tyrosine residues in the beta subunit thus initiating a cascade of down-stream signaling events leading to activation of the PI3K-AKT/PKB and the Ras-MAPK pathways. Binds to integrins ITGAV:ITGB3 and ITGA6:ITGB4. Its binding to integrins and subsequent ternary complex formation with integrins and IGFR1 are essential for IGF1 signaling. Induces the phosphorylation and activation of IGFR1, MAPK3/ERK1, MAPK1/ERK2 and AKT1. As part of the MAPK/ERK signaling pathway, acts as a negative regulator of apoptosis in cardiomyocytes via promotion of STUB1/CHIP-mediated ubiquitination and degradation of ICER-type isoforms of CREM. This Cavia porcellus (Guinea pig) protein is Insulin-like growth factor 1.